The primary structure comprises 1038 residues: P3N-PIPO polyprotein (1038 aa).

Positions 170 to 313 (LVAKSDFDDL…AGDVGRTMHY (144 aa)) constitute a Peptidase S30 domain. Active-site for P1 proteinase activity residues include His224, Glu233, and Ser266. The short motif at 365 to 368 (KMAC) is the Involved in interaction with stylet and aphid transmission element. The Involved in virions binding and aphid transmission signature appears at 622–624 (PTK). The region spanning 648 to 770 (MYIAKEGYCY…EGEMKWYRVG (123 aa)) is the Peptidase C6 domain. Residues Cys656 and His729 each act as for helper component proteinase activity in the active site.

This sequence belongs to the potyviridae P3N-PIPO polyprotein family. Interacts (via PIPO domain) with host PCaP1 protein; this interaction may help to anchor the movement complex to the plasma membrane from which the complex could move to the plasmodesmata. In terms of processing, potyviral RNA is expressed as two polyproteins which undergo post-translational proteolytic processing. Genome polyprotein is processed by NIa-pro, P1 and HC-pro proteinases resulting in the production of at least ten individual proteins. P3N-PIPO is cleaved by P1 and HC-pro proteinases resulting in the production of three individual proteins. The P1 proteinase and the HC-pro cleave only their respective C-termini autocatalytically.

It localises to the host cell junction. Its subcellular location is the host plasmodesma. The catalysed reaction is Hydrolyzes a Gly-|-Gly bond at its own C-terminus, commonly in the sequence -Tyr-Xaa-Val-Gly-|-Gly, in the processing of the potyviral polyprotein.. Required for aphid transmission and also has proteolytic activity. Only cleaves a Gly-Gly dipeptide at its own C-terminus. Interacts with virions and aphid stylets. Acts as a suppressor of RNA-mediated gene silencing, also known as post-transcriptional gene silencing (PTGS), a mechanism of plant viral defense that limits the accumulation of viral RNAs. May have RNA-binding activity. Functionally, allows efficient cell to cell propagation, by bypassing the host cell wall barrier. Transports viral genome to neighboring plant cells directly through plasmosdesmata, without any budding. This chain is P3N-PIPO polyprotein, found in Beet mosaic virus (BtMV).